Consider the following 296-residue polypeptide: Acetylglutamate kinase (296 aa).

Substrate is bound by residues 71-72 (GG), arginine 93, and asparagine 186.

It belongs to the acetylglutamate kinase family. ArgB subfamily.

The protein resides in the cytoplasm. The enzyme catalyses N-acetyl-L-glutamate + ATP = N-acetyl-L-glutamyl 5-phosphate + ADP. Its pathway is amino-acid biosynthesis; L-arginine biosynthesis; N(2)-acetyl-L-ornithine from L-glutamate: step 2/4. Its function is as follows. Catalyzes the ATP-dependent phosphorylation of N-acetyl-L-glutamate. The sequence is that of Acetylglutamate kinase from Synechococcus sp. (strain RCC307).